The following is a 101-amino-acid chain: UPF0358 protein EF_2458 (101 aa).

It belongs to the UPF0358 family.

This is UPF0358 protein EF_2458 from Enterococcus faecalis (strain ATCC 700802 / V583).